The primary structure comprises 249 residues: Type III pantothenate kinase (249 aa).

Residue 6–13 (DIGNSRTK) participates in ATP binding. Substrate contacts are provided by residues Tyr89 and 96–99 (GIDR). The Proton acceptor role is filled by Asp98. Residue Asp119 participates in K(+) binding. Thr122 provides a ligand contact to ATP. A substrate-binding site is contributed by Thr174.

The protein belongs to the type III pantothenate kinase family. Homodimer. Requires NH4(+) as cofactor. K(+) serves as cofactor.

It is found in the cytoplasm. The catalysed reaction is (R)-pantothenate + ATP = (R)-4'-phosphopantothenate + ADP + H(+). Its pathway is cofactor biosynthesis; coenzyme A biosynthesis; CoA from (R)-pantothenate: step 1/5. In terms of biological role, catalyzes the phosphorylation of pantothenate (Pan), the first step in CoA biosynthesis. The chain is Type III pantothenate kinase from Colwellia psychrerythraea (strain 34H / ATCC BAA-681) (Vibrio psychroerythus).